A 283-amino-acid chain; its full sequence is MREITPKRIMEMKGKEKITMITAYDYPSALLADKAGFDIVFVGDSLGMVVYGEQNTLNVTMDQMIFHTRAVAKAVKRALVLADMPFGSYEVSVEEGVKNAIKLIQAGADAVKIEGGYDHRKLVKKLVRMGIPVMGHTGLTPQRYLRLGGYRIMGENEEEVEEILRDAKALEKAGAFAVVLEFVLADVAKLVTEEVSIPTIGIGSGPYVDGQVLVWHDVLGLYESSPPFAKRYANLREEILRAISEFRKEVKEGKFPGKEHYWEYQDKETFNRIKENVMRKLRL.

Residues Asp-44 and Asp-83 each contribute to the Mg(2+) site. Residues 44–45, Asp-83, and Lys-112 each bind 3-methyl-2-oxobutanoate; that span reads DS. Glu-114 serves as a coordination point for Mg(2+). Catalysis depends on Glu-181, which acts as the Proton acceptor.

Belongs to the PanB family. In terms of assembly, homodecamer; pentamer of dimers. Mg(2+) serves as cofactor.

The protein resides in the cytoplasm. It catalyses the reaction 3-methyl-2-oxobutanoate + (6R)-5,10-methylene-5,6,7,8-tetrahydrofolate + H2O = 2-dehydropantoate + (6S)-5,6,7,8-tetrahydrofolate. The protein operates within cofactor biosynthesis; coenzyme A biosynthesis. Catalyzes the reversible reaction in which hydroxymethyl group from 5,10-methylenetetrahydrofolate is transferred onto alpha-ketoisovalerate to form ketopantoate. The chain is 3-methyl-2-oxobutanoate hydroxymethyltransferase from Pyrococcus furiosus (strain ATCC 43587 / DSM 3638 / JCM 8422 / Vc1).